A 298-amino-acid polypeptide reads, in one-letter code: Protease HtpX (298 aa).

Helical transmembrane passes span 4–24 (IGLF…TMNL) and 38–58 (LGNL…VSLA). Histidine 145 contributes to the Zn(2+) binding site. Residue glutamate 146 is part of the active site. Histidine 149 lines the Zn(2+) pocket. 2 helical membrane passes run 160 to 180 (LLQG…AYVV) and 194 to 214 (ITFI…ASMI). Zn(2+) is bound at residue glutamate 223.

Belongs to the peptidase M48B family. Zn(2+) is required as a cofactor.

Its subcellular location is the cell inner membrane. The chain is Protease HtpX from Hydrogenovibrio crunogenus (strain DSM 25203 / XCL-2) (Thiomicrospira crunogena).